We begin with the raw amino-acid sequence, 299 residues long: RGG repeats nuclear RNA binding protein A (299 aa).

Over residues 1 to 21 (RGGGRGGPRGGGRGRGPGRGR) the composition is skewed to gly residues. Disordered regions lie at residues 1–173 (RGGG…KEMT) and 232–299 (EAVE…LVAK). The segment covering 45 to 60 (RVQEDGESGKLSERRG) has biased composition (basic and acidic residues). Positions 61–78 (GYGGPRGGFHGGRRGGFN) are enriched in gly residues. 2 stretches are compositionally biased toward basic and acidic residues: residues 86–98 (EGER…DRRS) and 134–146 (DGEK…KEAG). Residues 88-98 (ERPRRVFDRRS) carry the Arginine-rich RNA-binding motif E-R-P-R-R-X-[F/Y]-[E/D]-R-R-S motif. Positions 267–278 (RGRGGFGGGVGG) are enriched in gly residues.

It belongs to the SERBP1-HABP4 family. Expressed in seedlings but not in roots.

The protein localises to the nucleus. Its subcellular location is the cytoplasm. The protein resides in the perinuclear region. Functionally, ribosome-binding protein that acts as a regulator of mRNA translation by promoting ribosome inactivation. Binds RNA. In Nicotiana tabacum (Common tobacco), this protein is RGG repeats nuclear RNA binding protein A.